Reading from the N-terminus, the 356-residue chain is Putative methylthioribose-1-phosphate isomerase (356 aa).

Substrate-binding positions include 57–59, Arg100, and Gln206; that span reads RGA. Asp247 (proton donor) is an active-site residue. 257–258 serves as a coordination point for substrate; sequence NK.

The protein belongs to the eIF-2B alpha/beta/delta subunits family. MtnA subfamily.

The enzyme catalyses 5-(methylsulfanyl)-alpha-D-ribose 1-phosphate = 5-(methylsulfanyl)-D-ribulose 1-phosphate. Its function is as follows. Catalyzes the interconversion of methylthioribose-1-phosphate (MTR-1-P) into methylthioribulose-1-phosphate (MTRu-1-P). The polypeptide is Putative methylthioribose-1-phosphate isomerase (Pyrococcus furiosus (strain ATCC 43587 / DSM 3638 / JCM 8422 / Vc1)).